Here is a 419-residue protein sequence, read N- to C-terminus: Enolase (419 aa).

Glutamine 161 serves as a coordination point for (2R)-2-phosphoglycerate. Residue glutamate 205 is the Proton donor of the active site. Positions 240, 283, and 309 each coordinate Mg(2+). (2R)-2-phosphoglycerate-binding residues include lysine 334, arginine 363, serine 364, and lysine 385. The Proton acceptor role is filled by lysine 334.

Belongs to the enolase family. Mg(2+) serves as cofactor.

The protein localises to the cytoplasm. Its subcellular location is the secreted. It is found in the cell surface. It carries out the reaction (2R)-2-phosphoglycerate = phosphoenolpyruvate + H2O. The protein operates within carbohydrate degradation; glycolysis; pyruvate from D-glyceraldehyde 3-phosphate: step 4/5. In terms of biological role, catalyzes the reversible conversion of 2-phosphoglycerate (2-PG) into phosphoenolpyruvate (PEP). It is essential for the degradation of carbohydrates via glycolysis. This is Enolase from Saccharolobus islandicus (strain Y.N.15.51 / Yellowstone #2) (Sulfolobus islandicus).